A 1098-amino-acid polypeptide reads, in one-letter code: Paired amphipathic helix protein Sin3b (1098 aa).

Gly residues predominate over residues 1-25 (MAHAGSGGSAGRGFGGSRWGRSGSG). The interval 1 to 26 (MAHAGSGGSAGRGFGGSRWGRSGSGG) is disordered. The interval 1–299 (MAHAGSGGSA…VGKYGTLQEF (299 aa)) is interaction with CRY1. PAH domains are found at residues 30–100 (LPVH…LPLG) and 145–230 (VPLE…LPEA). The interval 52-98 (PATYNGFLEIMKEFKSQSIDTPGVIRRVSQLFHEHPDLIVGFNAFLP) is interaction with REST. The span at 238–247 (NGSCEMNSGQ) shows a compositional bias: polar residues. Residues 238-274 (NGSCEMNSGQKNEEKSLEHNKKRSRPSLLRPVSAPAK) are disordered. Positions 275-499 (KKMKLRGTKD…CLGGTSEVIQ (225 aa)) are interaction with NCOR1. The PAH 3 domain maps to 283 to 360 (KDLSIAAVGK…AQFKSFLGVK (78 aa)). The interaction with SUDS3 and HDAC1 stretch occupies residues 383 to 550 (ASCKRIGSSY…REAQQGFNKI (168 aa)). Residues 661–702 (QQCPGTSDDSADERDRDRDSAEPERRRPTDEKPPADASPEPP) form a disordered region. Ser667 and Ser670 each carry phosphoserine. Residues 673 to 694 (ERDRDRDSAEPERRRPTDEKPP) are compositionally biased toward basic and acidic residues.

Component of the SIN3B complex, which includes SIN3B, HDAC2 or HDAC1, PHF12 and MORF4L1. Interacts with FOXK1/MNF, MXI, MAD, NCOR1 and SAP30. Interaction with SUDS3 enhances the interaction with HDAC1 to form a complex. Interacts with CRY1, HCFC1, MAD3, MAD4, MAEL, REST, RNF220 and SETDB1. Interacts with C6orf89. Interacts with MYT1L. Post-translationally, ubiquitinated by RNF220 that leads to proteasomal degradation.

It is found in the nucleus. Acts as a transcriptional repressor. Interacts with MXI1 to repress MYC responsive genes and antagonize MYC oncogenic activities. Interacts with MAD-MAX heterodimers by binding to MAD. The heterodimer then represses transcription by tethering SIN3B to DNA. Also forms a complex with FOXK1 which represses transcription. With FOXK1, regulates cell cycle progression probably by repressing cell cycle inhibitor genes expression. As part of the SIN3B complex represses transcription and counteracts the histone acetyltransferase activity of EP300 through the recognition H3K27ac marks by PHF12 and the activity of the histone deacetylase HDAC2. SIN3B complex is recruited downstream of the constitutively active genes transcriptional start sites through interaction with histones and mitigates histone acetylation and RNA polymerase II progression within transcribed regions contributing to the regulation of transcription. The polypeptide is Paired amphipathic helix protein Sin3b (Sin3b) (Mus musculus (Mouse)).